The primary structure comprises 305 residues: MGCKTSKMCCPRLRKKKRQKAHQEGLTSKELNDLNAKSQEPNELLQKIKKYEQETRDILQKHQAEKAALADTHKADVEARTLELQAQAQKDRDADIAKLLLEQAATIKVEMEEKLAELQKSNEQEKASLTETHQQLIDSLQERVDELKTQLASFQEKMKRVEESVLSQDYRRHIQDHGSPGQFWEQEIQSLHFVIEMKSELIREQDKRLRSHKSTMERNLVLEERSRTLQQENEALKVQTQKQGAVTVRLSEELLSTQATLEKQIHLREKLEREKEQNLYRAVNGDIPQQFSLQSNAQELPVMVL.

G2 carries N-myristoyl glycine lipidation. Positions L13–P41 are disordered. Coiled-coil stretches lie at residues N42–S167 and M216–N278.

This sequence belongs to the CCDC69 family.

The protein localises to the cytoplasm. It is found in the cytoskeleton. Its subcellular location is the spindle. The protein resides in the midbody. In terms of biological role, may act as a scaffold to regulate the recruitment and assembly of spindle midzone components. The polypeptide is Coiled-coil domain-containing protein 69 (ccdc69) (Xenopus tropicalis (Western clawed frog)).